Here is a 136-residue protein sequence, read N- to C-terminus: Histone H3.3 type c (136 aa).

The segment at 1–30 (MARTKQTARKSTGAKVPRKHLSSKSSFPSK) is disordered. K5 bears the N6,N6,N6-trimethyllysine; by set1; alternate mark. The residue at position 5 (K5) is an N6,N6-dimethyllysine; by set1; alternate. 2 positions are modified to N6-acetyllysine; alternate: K5 and K10. K5 is modified (N6-methyllysine; by set1; alternate). An N6,N6,N6-trimethyllysine; alternate modification is found at K10. Residue K10 is modified to N6,N6-dimethyllysine; alternate. N6-methyllysine; alternate is present on K10. S11 bears the Phosphoserine mark. At K15 the chain carries N6-acetyllysine. N6-acetyllysine; alternate is present on residues K19, K24, and K37. An N6-methyllysine; alternate mark is found at K19, K24, and K37. N6,N6,N6-trimethyllysine; alternate is present on K37. K37 is subject to N6,N6-dimethyllysine; alternate. At K57 the chain carries N6-acetyllysine. Position 80 is an N6,N6,N6-trimethyllysine; alternate (K80). Position 80 is an N6,N6-dimethyllysine; alternate (K80). K80 is subject to N6-methyllysine; alternate.

Belongs to the histone H3 family. The nucleosome is a histone octamer containing two molecules each of H2A, H2B, H3 and H4 assembled in one H3-H4 heterotetramer and two H2A-H2B heterodimers. The octamer wraps approximately 147 bp of DNA. In terms of processing, acetylation is generally linked to gene activation. Post-translationally, different methylation states of H3K4 mark distinct developmental phases. H3K4me2 is associated with euchromatic regions. H3K4me3 is a mark of active chromatin. set1 is responsible for all mono-, di- and tri-methylation of H3K4. H3K4me facilitates subsequent acetylation of H3 and H4. Methylation at H3K9 is linked to gene repression. H3S10ph, which is linked to gene activation, prevents methylation at H3K9 but facilitates acetylation of H3 and H4.

Its subcellular location is the nucleus. It is found in the chromosome. Functionally, core component of nucleosome. Nucleosomes wrap and compact DNA into chromatin, limiting DNA accessibility to the cellular machineries which require DNA as a template. Histones thereby play a central role in transcription regulation, DNA repair, DNA replication and chromosomal stability. DNA accessibility is regulated via a complex set of post-translational modifications of histones, also called histone code, and nucleosome remodeling. In Dictyostelium discoideum (Social amoeba), this protein is Histone H3.3 type c (H3c).